The primary structure comprises 466 residues: Dihydrolipoyl dehydrogenase (466 aa).

FAD is bound by residues 34–42, Lys51, and Gly114; that span reads ERVHLGGIC. Cysteines 42 and 47 form a disulfide. NAD(+) is bound by residues 180–184, Glu203, and 269–272; these read GSGAI and AIGV. 2 residues coordinate FAD: Asp311 and Ala319. His445 functions as the Proton acceptor in the catalytic mechanism.

This sequence belongs to the class-I pyridine nucleotide-disulfide oxidoreductase family. As to quaternary structure, homodimer. FAD is required as a cofactor.

Its subcellular location is the cytoplasm. It carries out the reaction N(6)-[(R)-dihydrolipoyl]-L-lysyl-[protein] + NAD(+) = N(6)-[(R)-lipoyl]-L-lysyl-[protein] + NADH + H(+). Functionally, lipoamide dehydrogenase is a component of the alpha-ketoacid dehydrogenase complexes. The chain is Dihydrolipoyl dehydrogenase (lpd) from Zymomonas mobilis subsp. mobilis (strain ATCC 31821 / ZM4 / CP4).